Reading from the N-terminus, the 329-residue chain is Phospholipid scramblase 4 (329 aa).

The segment at 1 to 51 (MSGVVPTAPEQPAGEMENQTKPPDPRPDAPPEYNSHFLPGPPGTAVPPPTG) is disordered. Positions 1–98 (MSGVVPTAPE…PMPNQSVPIT (98 aa)) are proline-rich domain (PRD). Over 1-303 (MSGVVPTAPE…IHFPLDLDVK (303 aa)) the chain is Cytoplasmic. The SH3-binding 1 motif lies at 18–25 (NQTKPPDP). The PPxY motif signature appears at 30–33 (PPEY). The span at 39 to 51 (PGPPGTAVPPPTG) shows a compositional bias: pro residues. The SH3-binding 2 signature appears at 41–49 (PPGTAVPPP). Y83 and Y88 each carry phosphotyrosine; by ABL. An SH3-binding 3 motif is present at residues 98-106 (TWMPGPTPM). 5 S-palmitoyl cysteine lipidation sites follow: C197, C198, C199, C201, and C202. The short motif at 271 to 283 (NIGSIIRKWNGLL) is the Nuclear localization signal element. The helical transmembrane segment at 304 to 320 (MKAMIFGACFLIDFMYF) threads the bilayer. The Extracellular portion of the chain corresponds to 321-329 (ERSPPQRSR).

It belongs to the phospholipid scramblase family. In terms of assembly, interacts with PDCD6. Interacts with KPNA2; this interaction mediates the nucleus import of PLSCR4. Ca(2+) serves as cofactor. It depends on Mg(2+) as a cofactor. Zn(2+) is required as a cofactor. Expressed in heart, brain, placenta, lung, liver, kidney, pancreas, spleen, thymus, prostate, testis, uterus, small intestine and colon. Not detected in peripheral blood lymphocytes.

The protein localises to the cell membrane. The protein resides in the nucleus. The catalysed reaction is a 1,2-diacyl-sn-glycero-3-phosphocholine(in) = a 1,2-diacyl-sn-glycero-3-phosphocholine(out). The enzyme catalyses a 1,2-diacyl-sn-glycero-3-phospho-L-serine(in) = a 1,2-diacyl-sn-glycero-3-phospho-L-serine(out). Catalyzes metal ion-induced ATP-independent rapid bidirectional and non-specific movement of phospholipids (lipid scrambling or lipid flip-flop) between the inner and outer leaflet of the plasma membrane and participates in the redistribution of phospholipids between membrane leaflets. Metal ions bind to the calcium-binding site and induce conformation change in the protein. Has a greater affi nity for Ca(2+) than Mg(2+) and Zn(2+). This is Phospholipid scramblase 4 from Homo sapiens (Human).